The following is a 667-amino-acid chain: Gamma-tubulin complex component 4 (667 aa).

The interval 424-446 is disordered; it reads DHKADATQPREVPSRETSPREAP.

The protein belongs to the TUBGCP family. In terms of assembly, component of the gamma-tubulin ring complex (gTuRC) consisting of TUBGCP2, TUBGCP3, TUBGCP4, TUBGCP5 and TUBGCP6 and gamma-tubulin TUBG1 or TUBG2. TUBGCP2, TUBGCP3, TUBGCP4, TUBGCP5 and TUBGCP6 assemble in a 5:5:2:1:1 stoichiometry; each is associated with a gamma-tubulin, thereby arranging 14 gamma-tubulins in a helical manner. Gamma-tubulin at the first position is blocked by TUBGCP3 at the last position, allowing 13 protafilaments to grow into a microtubule. The gTuRC (via TUBGCP3 and TUBGCP6) interacts with ACTB and MZT1; the interactions form a luminal bridge that stabilizes the initial structure during complex assembly. The gTuRC (via TUBGCP2) interacts with MZT2A/MZT2B and CDK5RAP2 (via CM1 motif); the interactions play a role in gTuRC activation. Interacts with NINL. Interacts with ATF5; the ATF5:PCNT:polyglutamylated tubulin (PGT) tripartite unites the mother centriole and the pericentriolar material (PCM) in the centrosome.

It is found in the cytoplasm. It localises to the cytoskeleton. Its subcellular location is the microtubule organizing center. The protein resides in the centrosome. Functionally, component of the gamma-tubulin ring complex (gTuRC) which mediates microtubule nucleation. The gTuRC regulates the minus-end nucleation of alpha-beta tubulin heterodimers that grow into microtubule protafilaments, a critical step in centrosome duplication and spindle formation. The polypeptide is Gamma-tubulin complex component 4 (Tubgcp4) (Mus musculus (Mouse)).